The primary structure comprises 421 residues: Histidine--tRNA ligase (421 aa).

This sequence belongs to the class-II aminoacyl-tRNA synthetase family. Homodimer.

It is found in the cytoplasm. It carries out the reaction tRNA(His) + L-histidine + ATP = L-histidyl-tRNA(His) + AMP + diphosphate + H(+). The sequence is that of Histidine--tRNA ligase from Francisella tularensis subsp. holarctica (strain OSU18).